We begin with the raw amino-acid sequence, 591 residues long: Developmental and secondary metabolism regulator VEA1 (591 aa).

The disordered stretch occupies residues 1 to 22; the sequence is MATKASSILHPPNETEHTMSRI. Positions 13–22 are enriched in basic and acidic residues; that stretch reads NETEHTMSRI. Residues 26 to 235 form the Velvet domain; the sequence is GKKLTYNLKV…AEQGCRVRIR (210 aa). Positions 40–45 match the Nuclear localization signal motif; sequence ERARAC. The segment at 238–547 is disordered; it reads VRMRRREPKP…TSGGSDDEIM (310 aa). The span at 245–260 shows a compositional bias: basic and acidic residues; sequence PKPNKDYGAYDDRRIT. Residues 306–321 show a composition bias toward polar residues; the sequence is HQQPSPNLAATPQSHL. Over residues 330 to 347 the composition is skewed to pro residues; that stretch reads YHAPPPPPTAHPAPPPAY. Residues 386-395 are compositionally biased toward polar residues; sequence YDQSKSSLPM. Low complexity predominate over residues 422–433; sequence PSQLHPTQQYQQ. A compositionally biased stretch (pro residues) spans 434-448; the sequence is PTPPPPPPAAIAPHP. Positions 452-493 are PEST; sequence RTPTKPSPSTFFPPTPSRLSVEVDSSNEADDAILNAIRTRRG. Basic and acidic residues predominate over residues 494-516; it reads YILDEKSGATKRSRDSSDHDLKP.

Belongs to the velvet family. VeA subfamily. As to quaternary structure, component of the heterotrimeric velvet complex composed of LAE1, VEA1 and VEL2; VEA1 acting as a bridging protein between LAE1 and VEL2.

It is found in the nucleus. Its subcellular location is the cytoplasm. Functionally, component of the velvet transcription factor complex that controls sexual/asexual developmental ratio in response to light, promoting sexual development in the darkness while stimulating asexual sporulation under illumination. The velvet complex hat acts as a global regulator for secondary metabolite gene expression. Regulates cleistothecial formation and hyphal growth. Acts as a positive regulator of virulence. This Ajellomyces capsulatus (Darling's disease fungus) protein is Developmental and secondary metabolism regulator VEA1.